A 191-amino-acid polypeptide reads, in one-letter code: Phosphoheptose isomerase (191 aa).

The region spanning 34–191 (IATALKDGNK…LVEEMVCERS (158 aa)) is the SIS domain. Substrate is bound at residue 49 to 51 (NGG). Residues His58 and Glu62 each contribute to the Zn(2+) site. Residues Glu62, 91–92 (ND), 117–119 (TTS), Ser122, and Gln169 each bind substrate. Residues Gln169 and His177 each contribute to the Zn(2+) site.

Belongs to the SIS family. GmhA subfamily. Requires Zn(2+) as cofactor.

The protein resides in the cytoplasm. It carries out the reaction 2 D-sedoheptulose 7-phosphate = D-glycero-alpha-D-manno-heptose 7-phosphate + D-glycero-beta-D-manno-heptose 7-phosphate. It participates in carbohydrate biosynthesis; D-glycero-D-manno-heptose 7-phosphate biosynthesis; D-glycero-alpha-D-manno-heptose 7-phosphate and D-glycero-beta-D-manno-heptose 7-phosphate from sedoheptulose 7-phosphate: step 1/1. In terms of biological role, catalyzes the isomerization of sedoheptulose 7-phosphate in D-glycero-D-manno-heptose 7-phosphate. The protein is Phosphoheptose isomerase of Aquifex aeolicus (strain VF5).